A 280-amino-acid chain; its full sequence is Protein phosphatase 1 regulatory subunit 3B-A (280 aa).

The PP1-binding motif motif lies at 58-61; that stretch reads RVSF. The CBM21 domain maps to 121-229; it reads RNRLQADSVC…SNKSLNYKIA (109 aa).

In terms of assembly, interacts with glycogen, PPP1CC catalytic subunit of PP1 and PYGL. Associates with glycogen particles. Forms complexes with debranching enzyme, glycogen phosphorylase, glycogen synthase and phosphorylase kinase which is necessary for its regulation of PP1 activity.

Functionally, acts as a glycogen-targeting subunit for phosphatase PP1. Facilitates interaction of the PP1 with enzymes of the glycogen metabolism and regulates its activity. Suppresses the rate at which PP1 dephosphorylates (inactivates) glycogen phosphorylase and enhances the rate at which it activates glycogen synthase and therefore limits glycogen breakdown. The polypeptide is Protein phosphatase 1 regulatory subunit 3B-A (ppp1r3b-a) (Xenopus laevis (African clawed frog)).